The sequence spans 112 residues: cAMP-regulated phosphoprotein 19 (112 aa).

Low complexity predominate over residues 1 to 11 (MSAESPEPASA). Residues 1–48 (MSAESPEPASAEEQKEMEDKVISPEKAEEAKLKARYPHLGQKPGGSDF) form a disordered region. At S2 the chain carries N-acetylserine. Positions 12–32 (EEQKEMEDKVISPEKAEEAKL) are enriched in basic and acidic residues. 2 positions are modified to phosphoserine; by GWL: S62 and S104. The disordered stretch occupies residues 73–112 (KNKQLPTAAPDKTEVTGDHIPTPQDLPQRKPSLVASKLAG). Residue S104 is modified to Phosphoserine; by PKA.

It belongs to the endosulfine family. As to quaternary structure, interacts (when phosphorylated at Ser-62) with PPP2R2D. Phosphorylation at Ser-62 by MASTL/GWL during mitosis is essential for interaction with PPP2R2D (PR55-delta) and subsequent inactivation of PP2A.

The protein localises to the cytoplasm. Functionally, protein phosphatase inhibitor that specifically inhibits protein phosphatase 2A (PP2A) during mitosis. Inhibition of PP2A is enhanced when ARPP19 is phosphorylated. When phosphorylated at Ser-62 during mitosis, specifically interacts with PPP2R2D (PR55-delta) and inhibits its activity, leading to inactivation of PP2A, an essential condition to keep cyclin-B1-CDK1 activity high during M phase. This chain is cAMP-regulated phosphoprotein 19 (ARPP19), found in Gallus gallus (Chicken).